Reading from the N-terminus, the 111-residue chain is C-type lectin lectoxin-Enh1 (111 aa).

Residues 1–23 (MGQFTVVSLGLLAMFLSLSGAKG) form the signal peptide. Cys-26 and Cys-37 are oxidised to a cystine. One can recognise a C-type lectin domain in the interval 33-108 (RNGVCNKLFP…CASLHPFICQ (76 aa)). The Mannose-binding motif lies at 72-74 (EPN). 3 residues coordinate Ca(2+): Glu-80, Asn-95, and Asp-96. Cys-82 and Cys-99 form a disulfide bridge.

It belongs to the true venom lectin family. As to expression, expressed by the venom gland.

It is found in the secreted. Functionally, mannose-binding lectin which recognizes specific carbohydrate structures and agglutinates a variety of animal cells by binding to cell-surface glycoproteins and glycolipids. May be a calcium-dependent lectin. The polypeptide is C-type lectin lectoxin-Enh1 (Pseudoferania polylepis (Macleay's water snake)).